Here is a 149-residue protein sequence, read N- to C-terminus: Nucleoside diphosphate kinase (149 aa).

ATP-binding residues include Lys9, Phe57, Arg85, Thr91, Arg102, and Asn112. The active-site Pros-phosphohistidine intermediate is the His115.

It belongs to the NDK family. Homotetramer. Requires Mg(2+) as cofactor.

The protein localises to the cytoplasm. It catalyses the reaction a 2'-deoxyribonucleoside 5'-diphosphate + ATP = a 2'-deoxyribonucleoside 5'-triphosphate + ADP. It carries out the reaction a ribonucleoside 5'-diphosphate + ATP = a ribonucleoside 5'-triphosphate + ADP. Its function is as follows. Major role in the synthesis of nucleoside triphosphates other than ATP. The ATP gamma phosphate is transferred to the NDP beta phosphate via a ping-pong mechanism, using a phosphorylated active-site intermediate. This Desulfitobacterium hafniense (strain Y51) protein is Nucleoside diphosphate kinase.